We begin with the raw amino-acid sequence, 307 residues long: Golgi to ER traffic protein 2 (307 aa).

Residues Met1–Leu173 lie on the Cytoplasmic side of the membrane. The segment covering Leu41–Val52 has biased composition (polar residues). The segment at Leu41–Pro73 is disordered. The chain crosses the membrane as a helical span at residues Trp174–Tyr194. The Lumenal segment spans residues Leu195–Asn220. The helical transmembrane segment at Phe221–Phe240 threads the bilayer. Topologically, residues His241–Glu284 are cytoplasmic. Residues Leu285–Phe305 traverse the membrane as a helical segment. Over Thr306–Lys307 the chain is Lumenal.

This sequence belongs to the GET2 family. Component of the Golgi to ER traffic (GET) complex, which is composed of GET1, GET2 and GET3. Within the complex, GET1 and GET2 form a heterotetramer which is stabilized by phosphatidylinositol binding and which binds to the GET3 homodimer.

It is found in the endoplasmic reticulum membrane. It localises to the golgi apparatus membrane. Its function is as follows. Required for the post-translational delivery of tail-anchored (TA) proteins to the endoplasmic reticulum. Together with GET1, acts as a membrane receptor for soluble GET3, which recognizes and selectively binds the transmembrane domain of TA proteins in the cytosol. The GET complex cooperates with the HDEL receptor ERD2 to mediate the ATP-dependent retrieval of resident ER proteins that contain a C-terminal H-D-E-L retention signal from the Golgi to the ER. This chain is Golgi to ER traffic protein 2, found in Candida tropicalis (strain ATCC MYA-3404 / T1) (Yeast).